Reading from the N-terminus, the 270-residue chain is Putative postmeiotic segregation increased 2-like protein 11 (270 aa).

It belongs to the DNA mismatch repair MutL/HexB family.

This chain is Putative postmeiotic segregation increased 2-like protein 11 (PMS2P11), found in Homo sapiens (Human).